The chain runs to 461 residues: Argininosuccinate lyase (461 aa).

This sequence belongs to the lyase 1 family. Argininosuccinate lyase subfamily.

Its subcellular location is the cytoplasm. It carries out the reaction 2-(N(omega)-L-arginino)succinate = fumarate + L-arginine. The protein operates within amino-acid biosynthesis; L-arginine biosynthesis; L-arginine from L-ornithine and carbamoyl phosphate: step 3/3. The sequence is that of Argininosuccinate lyase from Chloroflexus aurantiacus (strain ATCC 29366 / DSM 635 / J-10-fl).